The primary structure comprises 241 residues: Eukaryotic translation initiation factor 3 subunit J (241 aa).

The tract at residues Met1 to Glu94 is disordered. A compositionally biased stretch (acidic residues) spans Gly26 to Lys45. A coiled-coil region spans residues Lys61–Thr118. Residues Asp66 to Glu89 are compositionally biased toward basic and acidic residues.

The protein belongs to the eIF-3 subunit J family. Component of the eukaryotic translation initiation factor 3 (eIF-3) complex.

The protein resides in the cytoplasm. In terms of biological role, component of the eukaryotic translation initiation factor 3 (eIF-3) complex, which is involved in protein synthesis of a specialized repertoire of mRNAs and, together with other initiation factors, stimulates binding of mRNA and methionyl-tRNAi to the 40S ribosome. The eIF-3 complex specifically targets and initiates translation of a subset of mRNAs involved in cell proliferation. This Bombyx mori (Silk moth) protein is Eukaryotic translation initiation factor 3 subunit J.